The following is a 69-amino-acid chain: Large ribosomal subunit protein bL32c (69 aa).

The protein belongs to the bacterial ribosomal protein bL32 family.

It is found in the plastid. The protein localises to the chloroplast. The polypeptide is Large ribosomal subunit protein bL32c (rpl32) (Marchantia polymorpha (Common liverwort)).